A 334-amino-acid chain; its full sequence is Glycerol-3-phosphate dehydrogenase [NAD(P)+] (334 aa).

Positions 13, 33, and 106 each coordinate NADPH. Lys106, Gly137, and Ser139 together coordinate sn-glycerol 3-phosphate. Ala141 is a binding site for NADPH. Sn-glycerol 3-phosphate is bound by residues Lys192, Asp245, Ser255, Arg256, and Asn257. Lys192 (proton acceptor) is an active-site residue. Arg256 contributes to the NADPH binding site. Val280 and Glu282 together coordinate NADPH.

It belongs to the NAD-dependent glycerol-3-phosphate dehydrogenase family.

It localises to the cytoplasm. The enzyme catalyses sn-glycerol 3-phosphate + NAD(+) = dihydroxyacetone phosphate + NADH + H(+). It catalyses the reaction sn-glycerol 3-phosphate + NADP(+) = dihydroxyacetone phosphate + NADPH + H(+). The protein operates within membrane lipid metabolism; glycerophospholipid metabolism. Functionally, catalyzes the reduction of the glycolytic intermediate dihydroxyacetone phosphate (DHAP) to sn-glycerol 3-phosphate (G3P), the key precursor for phospholipid synthesis. The protein is Glycerol-3-phosphate dehydrogenase [NAD(P)+] of Chlamydia pneumoniae (Chlamydophila pneumoniae).